The primary structure comprises 493 residues: Na(+)/H(+) antiporter subunit D (493 aa).

The next 14 helical transmembrane spans lie at 4–23, 30–52, 72–94, 107–126, 130–149, 162–184, 204–226, 233–255, 270–292, 299–321, 325–347, 368–390, 405–427, and 448–470; these read LVIL…ILFA, RVIS…VDVY, LVAD…VCLF, YYFY…AFLT, FNLF…LIVL, YVVI…YSIT, VLNV…FPLY, YFGP…GIYA, FTHT…GAVS, ILSY…YTQL, GAIY…AGAT, WLAW…SGFF, YIIA…KIFI, and LLLP…EPIF.

It belongs to the CPA3 antiporters (TC 2.A.63) subunit D family. In terms of assembly, forms a heterooligomeric complex that consists of seven subunits: MrpA, MrpB, MrpC, MrpD, MrpE, MrpF and MrpG.

It is found in the cell membrane. Mnh complex is a Na(+)Li(+)/H(+) antiporter involved in Na(+) and/or Li(+) excretion and Na(+) resistance. Na(+)/H(+) antiport consumes a transmembrane electrical potential, and is thus inferred to be electrogenic. Does not transport K(+), Ca(2+) or Mg(2+). Its function is as follows. Mrp complex is a Na(+)/H(+) antiporter involved in Na(+) excretion and Na(+) resistance. The protein is Na(+)/H(+) antiporter subunit D (mrpD) of Alkalihalophilus pseudofirmus (strain ATCC BAA-2126 / JCM 17055 / OF4) (Bacillus pseudofirmus).